Reading from the N-terminus, the 263-residue chain is MDYWFAEIVTIGNEVLSGKTVNTNASHIGRRLTSLGFTVRRITVVMDDIDEIVSGFREAIDRKPKVIVSSGGLGPTWDDKTAEGLAKALGVNLELNKTAFDMILEKYTKRNIPLTEERKKMAYLPYGAMAVENNEGIAPGIYIYHNNIDILATPGVPREMENVLENFINKMLRNKPNLKYLEDFIYVENVMESALAPYVKELVKKYDIYIKTHPKSYELLRPILEIQIAGSGREEEIKVKIEKVKNELLDAIKKLNGIIRNSL.

This sequence belongs to the CinA family.

This is Protein M1627_2099 from Saccharolobus islandicus (strain M.16.27) (Sulfolobus islandicus).